The primary structure comprises 1575 residues: MNILSMLSNDSAVQLQLQLQLQLQLQLNLQSAPSKASPPTLLPKQTTATTTNATGNTKTVARYSAGDINILNDENSHGVDESIDEPVTNGQATNKESVKQEPTQPTNNTETEKKPLTLSIQNGADKKSLPPQSQPPRINPLVADVTLSTSKFKNVLAHIQHDQLEIDLDYKFKFESNVSLIDQLDKNQRLSQDLRILKFDEVKSNNYLISTHQFTTNYIDRVVAEDISSRNNKISDTNKNKEIIHIDHSKPLHHNSTRGKEYKWGSTREIHKVESKPKRKRNTENSETNNSRSTVSSKASTPSKSLAFGSTHHVPIRPKGSKGTNLSSSSGPITDITNDSNNVRRSSRPKSKRKAYEDGEGEDNGNNIDSNSTDNNNRNKTQEGGRGPKRIRIKLKVKPEGENEGEEKDEGKGKGRGKGKGKGKGKGKEKDGDKEEEDENNANGENGKSKGSVSSSTTTTTTAAAAAAGGGGSTGSALGTTTSNSSTSKEQKAFMRQYDNTYVAIWKDMSRKDGPKVSRLMQQSTQAKLINLKKTCILAAREAKRWQVKNTKNQKDLSTKARRAMREMFNFWKRNERIERELKKKHEKELVEKAKREEEERESKRQSRKLNFLITQTELYSHFIGKKIKTDEIEGTDADPRIKAQEKAHLDKYAGVDAANNDILAIDFDNDDEDALHRAAAQNAQNALANAQNQAKQFDDTEPFKNPDTNGEEMNFQNPTLLGDLSIEQPKMLKCTLKEYQIKGLNWLANLYEQGINGILADEMGLGKTVQSISVLSYLAETHNIWGPFLVVTPASTLHNWQQEISKFVPNFKVLPYWGHAKDRKVLRKFWDRKSLRYDKDAPFHVLVTSYQLIVSDIAYFQKMKWQYMILDEAQAIKSSQSSRWKSLLSLSCRNRLLLTGTPIQNSMQELWALLHFIMPTLFDSHDEFSDWFSKDIESHAQSNTGLDEQQLRRLHMILKPFMLRRIKKNVQSELGDKVEIDLFCDLTNRQKKYYQSLRSQISIMDLIDATTTNSSSNNSSLDDSSTTSLVNLVMQFRKVCNHPDLFERADVRSPMALVKFAETGSFLREGNDLDVSYASENLINYNLPRLIYDDLISANENKNDFGSVYAKFSVYDPENLRDLGWISSAGTSPNEIQQLGKMNVLERAIKLQRYTTGSPLDRINYLYEGDYSSPNSKLLINPQNQHMISQQQIENSSVLLDLCNISQKVYEEMYLNTQDPAFTPLASAPPITIVCSSNNFQNKLQNELFNPTIRSALAPMSLNKELEFMNNNTPLELYPPSNMLPSSLSKVNDYSNIRMPSMDRFITESGKLAKLDELLVKLKQEDHRVLIYFQMTKMMDLMEEYLTFKQHKYIRLDGSSKLDDRRDLVHDWQTKPEIFVFLLSTRAGGLGINLTAADTVVFYDSDWNPTIDSQAMDRAHRLGQTRQVTVYRLLTRNTIEERMRDRAKQKEQVQQVVMEGKATTIMSKKEDAASKKKDVAFLLLGGSGDGDGDGTGVNSGVDTSNDVSKSTTPKPEVGKKKNNGNKKNVFGNGKKRVREEDGEEEDALNSKRLQELYHEGEGEFSGTVTPAPGV.

3 disordered regions span residues 33–57, 71–116, and 239–490; these read PSKA…TGNT, LNDE…KKPL, and KNKE…TSKE. Low complexity-rich tracts occupy residues 42–57 and 100–109; these read LPKQ…TGNT and QEPTQPTNNT. 2 stretches are compositionally biased toward basic and acidic residues: residues 239-250 and 258-276; these read KNKEIIHIDHSK and RGKE…VESK. Residues 285–297 show a composition bias toward low complexity; sequence NSETNNSRSTVSS. Positions 322 to 343 are enriched in polar residues; the sequence is KGTNLSSSSGPITDITNDSNNV. Positions 364-379 are enriched in low complexity; sequence NGNNIDSNSTDNNNRN. Basic residues-rich tracts occupy residues 387–396 and 414–425; these read GPKRIRIKLK and KGRGKGKGKGKG. Low complexity-rich tracts occupy residues 441 to 467 and 475 to 488; these read NANG…AAAA and GSAL…SSTS. The region spanning 505–630 is the DBINO domain; that stretch reads IWKDMSRKDG…SHFIGKKIKT (126 aa). The interval 690–718 is disordered; that stretch reads NAQNQAKQFDDTEPFKNPDTNGEEMNFQN. In terms of domain architecture, Helicase ATP-binding spans 749–921; the sequence is ANLYEQGING…WALLHFIMPT (173 aa). ATP is bound at residue 762–769; it reads DEMGLGKT. Positions 872 to 875 match the DEAQ box motif; sequence DEAQ. A Helicase C-terminal domain is found at 1315-1470; sequence KLDELLVKLK…GKATTIMSKK (156 aa). Residues 1488 to 1498 are compositionally biased toward gly residues; that stretch reads SGDGDGDGTGV. The segment at 1488–1549 is disordered; it reads SGDGDGDGTG…EEDGEEEDAL (62 aa). Positions 1505 to 1514 are enriched in polar residues; sequence SNDVSKSTTP.

The protein belongs to the SNF2/RAD54 helicase family. As to quaternary structure, component of the INO80 chromatin-remodeling complex.

It is found in the nucleus. It catalyses the reaction ATP + H2O = ADP + phosphate + H(+). In terms of biological role, ATPase component of the INO80 complex which remodels chromatin by shifting nucleosomes and is involved in DNA repair. The polypeptide is Chromatin-remodeling ATPase INO80 (INO80) (Lodderomyces elongisporus (strain ATCC 11503 / CBS 2605 / JCM 1781 / NBRC 1676 / NRRL YB-4239) (Yeast)).